The following is a 73-amino-acid chain: Putative membrane protein insertion efficiency factor (73 aa).

The protein belongs to the UPF0161 family.

The protein localises to the cell inner membrane. Its function is as follows. Could be involved in insertion of integral membrane proteins into the membrane. This is Putative membrane protein insertion efficiency factor from Dinoroseobacter shibae (strain DSM 16493 / NCIMB 14021 / DFL 12).